Consider the following 635-residue polypeptide: Cationic amino acid transporter 4 (635 aa).

3 helical membrane-spanning segments follow: residues 42 to 62 (LTLL…TGTV), 66 to 86 (MAGP…LLAA), and 113 to 133 (IWAF…GAAV). Residues Asn-146, Asn-151, and Asn-195 are each glycosylated (N-linked (GlcNAc...) asparagine). A helical membrane pass occupies residues 197–217 (TFSAISLIVILFIIVLGFILA). Asn-221 carries an N-linked (GlcNAc...) asparagine glycan. 5 helical membrane-spanning segments follow: residues 229 to 249 (FAPF…YAFV), 270 to 290 (MAIA…STVL), 318 to 338 (GFIV…SNLF), 365 to 385 (QVPV…ALLL), and 391 to 411 (VQFL…SIIV). Phosphoserine occurs at positions 422 and 427. A run of 4 helical transmembrane segments spans residues 478–498 (VAWA…VLVF), 508–528 (WGYV…LLVL), 539–559 (TFQI…NTCL), and 567–587 (TWLR…GYGI).

This sequence belongs to the amino acid-polyamine-organocation (APC) superfamily. Cationic amino acid transporter (CAT) (TC 2.A.3.3) family.

The protein localises to the membrane. Functionally, involved in the transport of the cationic amino acids (arginine, lysine and ornithine). The polypeptide is Cationic amino acid transporter 4 (Slc7a4) (Mus musculus (Mouse)).